Consider the following 153-residue polypeptide: CASP-like protein 5B1 (153 aa).

The Cytoplasmic segment spans residues 1–20; the sequence is MRELAGSPGTWSGLSLRVGQ. A helical transmembrane segment spans residues 21–41; it reads LVFAAASVCATASALGFAAYT. Position 42 (Ala-42) is a topological domain, extracellular. The chain crosses the membrane as a helical span at residues 43-63; the sequence is FCYLIASMGLQALWSLGLACL. Residues 64 to 76 lie on the Cytoplasmic side of the membrane; the sequence is DCYALKFKKDLHS. Residues 77–97 traverse the membrane as a helical segment; the sequence is AVLLSLFVVGDWVTAILSFAA. Residues 98–128 lie on the Extracellular side of the membrane; sequence SCSAAGVVVLFDRDIYACRNPQLPCGRFELA. Residues 129–149 form a helical membrane-spanning segment; sequence IACAFLSWAFSATSALVMFWL. The Cytoplasmic portion of the chain corresponds to 150–153; sequence LASL.

The protein belongs to the Casparian strip membrane proteins (CASP) family. Homodimer and heterodimers.

The protein resides in the cell membrane. This Oryza sativa subsp. indica (Rice) protein is CASP-like protein 5B1.